The chain runs to 86 residues: Cell division topological specificity factor (86 aa).

Belongs to the MinE family.

Functionally, prevents the cell division inhibition by proteins MinC and MinD at internal division sites while permitting inhibition at polar sites. This ensures cell division at the proper site by restricting the formation of a division septum at the midpoint of the long axis of the cell. The sequence is that of Cell division topological specificity factor from Shewanella piezotolerans (strain WP3 / JCM 13877).